Here is a 737-residue protein sequence, read N- to C-terminus: Angiotensin-converting enzyme-like protein Ace3 (737 aa).

The N-terminal stretch at 1–23 (MNLPWALLLVLLSHRQLLPWLRT) is a signal peptide. Topologically, residues 24-639 (VGETSLNDFY…TDTEPEQAYL (616 aa)) are extracellular. Positions 32 to 611 (FYSEAQAKLF…VKQGDTLGWP (580 aa)) constitute a Peptidase M2 domain. Residues Cys146 and Cys152 are joined by a disulfide bond. Residues Arg180 and Tyr218 each contribute to the chloride site. Cys346 and Cys364 form a disulfide bridge. Residues His377 and His381 each contribute to the Zn(2+) site. An N-linked (GlcNAc...) asparagine glycan is attached at Asn390. Glu405 contributes to the Zn(2+) binding site. Positions 479, 483, and 516 each coordinate chloride. Cys532 and Cys544 form a disulfide bridge. A helical transmembrane segment spans residues 640-660 (GQWVLLSMSFFMLVLILALGF). Residues 661–700 (RLHYLEKQLLDEDTMILKTLPYSYFLGIAMEPHQAARKQW) are Cytoplasmic-facing. A helical membrane pass occupies residues 701-721 (LLLGLCCILMLCCIGLLIRIV). Over 722–737 (TQNTENTPWMKNEGQS) the chain is Extracellular.

Belongs to the peptidase M2 family. Interacts with IZUMO1. Requires Zn(2+) as cofactor. Expressed in sperm and testis (at protein level). Expressed in heart and testis. Not detected in kidney, lung, liver, brain, ovary, spleen and thymus.

The protein resides in the cytoplasmic vesicle. Its subcellular location is the secretory vesicle. It localises to the acrosome membrane. This chain is Angiotensin-converting enzyme-like protein Ace3, found in Mus musculus (Mouse).